A 176-amino-acid chain; its full sequence is Large ribosomal subunit protein uL6 (176 aa).

Belongs to the universal ribosomal protein uL6 family. In terms of assembly, part of the 50S ribosomal subunit.

This protein binds to the 23S rRNA, and is important in its secondary structure. It is located near the subunit interface in the base of the L7/L12 stalk, and near the tRNA binding site of the peptidyltransferase center. This Paraburkholderia phytofirmans (strain DSM 17436 / LMG 22146 / PsJN) (Burkholderia phytofirmans) protein is Large ribosomal subunit protein uL6.